Here is a 418-residue protein sequence, read N- to C-terminus: Serine hydroxymethyltransferase (418 aa).

Residues L121 and 125–127 (GHL) each bind (6S)-5,6,7,8-tetrahydrofolate. An N6-(pyridoxal phosphate)lysine modification is found at K230. Position 355–357 (355–357 (SPF)) interacts with (6S)-5,6,7,8-tetrahydrofolate.

Belongs to the SHMT family. As to quaternary structure, homodimer. Requires pyridoxal 5'-phosphate as cofactor.

The protein localises to the cytoplasm. The enzyme catalyses (6R)-5,10-methylene-5,6,7,8-tetrahydrofolate + glycine + H2O = (6S)-5,6,7,8-tetrahydrofolate + L-serine. The protein operates within one-carbon metabolism; tetrahydrofolate interconversion. Its pathway is amino-acid biosynthesis; glycine biosynthesis; glycine from L-serine: step 1/1. Functionally, catalyzes the reversible interconversion of serine and glycine with tetrahydrofolate (THF) serving as the one-carbon carrier. This reaction serves as the major source of one-carbon groups required for the biosynthesis of purines, thymidylate, methionine, and other important biomolecules. Also exhibits THF-independent aldolase activity toward beta-hydroxyamino acids, producing glycine and aldehydes, via a retro-aldol mechanism. This chain is Serine hydroxymethyltransferase, found in Alcanivorax borkumensis (strain ATCC 700651 / DSM 11573 / NCIMB 13689 / SK2).